The following is a 106-amino-acid chain: Replication protein A 14 kDa subunit B (106 aa).

Residue Met1 is modified to N-acetylmethionine.

The protein belongs to the replication factor A protein 3 family. In terms of assembly, component of the heterotrimeric canonical replication protein A complex (RPA).

The protein resides in the nucleus. As part of the replication protein A (RPA/RP-A), a single-stranded DNA-binding heterotrimeric complex, may play an essential role in DNA replication, recombination and repair. Binds and stabilizes single-stranded DNA intermediates, preventing complementary DNA reannealing and recruiting different proteins involved in DNA metabolism. The sequence is that of Replication protein A 14 kDa subunit B (RPA3B) from Arabidopsis thaliana (Mouse-ear cress).